Here is a 762-residue protein sequence, read N- to C-terminus: Endonuclease MutS2 (762 aa).

The interval 1-22 (MSDAPKRSLNPTLMMNNNNTPP) is disordered. The segment covering 9–20 (LNPTLMMNNNNT) has biased composition (low complexity). 333–340 (GVNAGGKT) is a binding site for ATP. Residues 688–762 (LDLRGQRSEE…GGSGVKIVKL (75 aa)) enclose the Smr domain.

This sequence belongs to the DNA mismatch repair MutS family. MutS2 subfamily. In terms of assembly, homodimer. Binds to stalled ribosomes, contacting rRNA.

ATPase activity is stimulated by DNA. In terms of biological role, endonuclease that is involved in the suppression of homologous recombination and may thus have a key role in the control of bacterial genetic diversity. Also involved in repairing oxidative DNA damage. Has ATPase activity. Binds DNA. Its function is as follows. Endonuclease that is involved in the suppression of homologous recombination and thus may have a key role in the control of bacterial genetic diversity. Acts as a ribosome collision sensor, splitting the ribosome into its 2 subunits. Detects stalled/collided 70S ribosomes which it binds and splits by an ATP-hydrolysis driven conformational change. Acts upstream of the ribosome quality control system (RQC), a ribosome-associated complex that mediates the extraction of incompletely synthesized nascent chains from stalled ribosomes and their subsequent degradation. Probably generates substrates for RQC. This Helicobacter pylori (strain ATCC 700392 / 26695) (Campylobacter pylori) protein is Endonuclease MutS2.